A 235-amino-acid polypeptide reads, in one-letter code: MDARERLIVGLDVPTIGEAERLVSTLGDDILFYKIGYQLVFAGGLEFARDLAASGKKIFLDMKLLDIDNTVASGVENIAKMGMSMLTLHAYPKAMRAAVEAAAGSGLCLLGVTVLTSMDAEDLAEAGYNQDPHSLVLSRAGQARAAGMGGIVCSAAEAAEVREVVGPDMAIVTPGIRPTGSDKGDQKRVMTPFDALKAGSTHLVVGRPIVKAPDPKQAARAVLNEMVGALWPANR.

Substrate-binding positions include Asp12, Lys34, 61 to 70, Thr116, Arg177, Gln186, Gly206, and Arg207; that span reads DMKLLDIDNT. The active-site Proton donor is Lys63.

Belongs to the OMP decarboxylase family. Type 1 subfamily. As to quaternary structure, homodimer.

The catalysed reaction is orotidine 5'-phosphate + H(+) = UMP + CO2. The protein operates within pyrimidine metabolism; UMP biosynthesis via de novo pathway; UMP from orotate: step 2/2. Its function is as follows. Catalyzes the decarboxylation of orotidine 5'-monophosphate (OMP) to uridine 5'-monophosphate (UMP). This Rhizobium etli (strain ATCC 51251 / DSM 11541 / JCM 21823 / NBRC 15573 / CFN 42) protein is Orotidine 5'-phosphate decarboxylase.